We begin with the raw amino-acid sequence, 500 residues long: Cobyric acid synthase (500 aa).

Positions 251–449 (KLNIVIPIMP…LHGVFDHPDA (199 aa)) constitute a GATase cobBQ-type domain. Cysteine 332 functions as the Nucleophile in the catalytic mechanism. Residue histidine 441 is part of the active site.

Belongs to the CobB/CobQ family. CobQ subfamily.

It participates in cofactor biosynthesis; adenosylcobalamin biosynthesis. Catalyzes amidations at positions B, D, E, and G on adenosylcobyrinic A,C-diamide. NH(2) groups are provided by glutamine, and one molecule of ATP is hydrogenolyzed for each amidation. The sequence is that of Cobyric acid synthase from Marinomonas sp. (strain MWYL1).